Here is a 132-residue protein sequence, read N- to C-terminus: uncharacterized protein (132 aa).

The segment at 107-132 (LNTFSGSGQKHSQPGSGQHPFSFRKD) is disordered. The segment covering 108 to 122 (NTFSGSGQKHSQPGS) has biased composition (polar residues).

This is an uncharacterized protein from Bacillus subtilis (strain 168).